The primary structure comprises 201 residues: Adenylyl-sulfate kinase (201 aa).

An ATP-binding site is contributed by 35–42; the sequence is GLSGSGKS. Serine 109 (phosphoserine intermediate) is an active-site residue.

The protein belongs to the APS kinase family.

It carries out the reaction adenosine 5'-phosphosulfate + ATP = 3'-phosphoadenylyl sulfate + ADP + H(+). The protein operates within sulfur metabolism; hydrogen sulfide biosynthesis; sulfite from sulfate: step 2/3. Its function is as follows. Catalyzes the synthesis of activated sulfate. The chain is Adenylyl-sulfate kinase from Shigella boydii serotype 18 (strain CDC 3083-94 / BS512).